A 250-amino-acid polypeptide reads, in one-letter code: DNA repair protein RecO (250 aa).

This sequence belongs to the RecO family.

Its function is as follows. Involved in DNA repair and RecF pathway recombination. This Staphylococcus aureus (strain Mu3 / ATCC 700698) protein is DNA repair protein RecO.